A 142-amino-acid polypeptide reads, in one-letter code: 3-hydroxyacyl-[acyl-carrier-protein] dehydratase FabZ (142 aa).

His49 is an active-site residue.

The protein belongs to the thioester dehydratase family. FabZ subfamily.

It localises to the cytoplasm. It catalyses the reaction a (3R)-hydroxyacyl-[ACP] = a (2E)-enoyl-[ACP] + H2O. In terms of biological role, involved in unsaturated fatty acids biosynthesis. Catalyzes the dehydration of short chain beta-hydroxyacyl-ACPs and long chain saturated and unsaturated beta-hydroxyacyl-ACPs. The sequence is that of 3-hydroxyacyl-[acyl-carrier-protein] dehydratase FabZ from Deinococcus geothermalis (strain DSM 11300 / CIP 105573 / AG-3a).